The primary structure comprises 285 residues: UPF0703 protein YcgQ (285 aa).

4 helical membrane passes run 4-24 (LLVLMGFTFFFYHLHASGNLT), 34-54 (LSFIAIFLLAILTAVQAYLFI), 89-109 (LIYVVFLFPLVSGIFFPIATL), and 210-230 (FVLRFGIIHCIADSGVYGMLV).

This sequence belongs to the UPF0703 family.

The protein localises to the cell membrane. This is UPF0703 protein YcgQ (ycgQ) from Bacillus subtilis (strain 168).